Here is a 208-residue protein sequence, read N- to C-terminus: Large ribosomal subunit protein bL25 (208 aa).

This sequence belongs to the bacterial ribosomal protein bL25 family. CTC subfamily. As to quaternary structure, part of the 50S ribosomal subunit; part of the 5S rRNA/L5/L18/L25 subcomplex. Contacts the 5S rRNA. Binds to the 5S rRNA independently of L5 and L18.

Its function is as follows. This is one of the proteins that binds to the 5S RNA in the ribosome where it forms part of the central protuberance. The sequence is that of Large ribosomal subunit protein bL25 from Burkholderia pseudomallei (strain K96243).